Consider the following 264-residue polypeptide: Undecaprenyl-diphosphatase (264 aa).

7 helical membrane-spanning segments follow: residues Glu42–Phe62, Thr82–Phe102, Leu109–Trp129, Ala146–Ala166, Phe184–Gly204, Ile215–Ile235, and Leu243–Ala263.

Belongs to the UppP family.

The protein localises to the cell membrane. It carries out the reaction di-trans,octa-cis-undecaprenyl diphosphate + H2O = di-trans,octa-cis-undecaprenyl phosphate + phosphate + H(+). Functionally, catalyzes the dephosphorylation of undecaprenyl diphosphate (UPP). Confers resistance to bacitracin. This is Undecaprenyl-diphosphatase from Christiangramia forsetii (strain DSM 17595 / CGMCC 1.15422 / KT0803) (Gramella forsetii).